Reading from the N-terminus, the 313-residue chain is HPr kinase/phosphorylase (313 aa).

Residues His140 and Lys161 contribute to the active site. Gly155 to Ser162 serves as a coordination point for ATP. Residue Ser162 coordinates Mg(2+). Asp179 (proton acceptor; for phosphorylation activity. Proton donor; for dephosphorylation activity) is an active-site residue. The tract at residues Leu203 to Asp212 is important for the catalytic mechanism of both phosphorylation and dephosphorylation. A Mg(2+)-binding site is contributed by Glu204. The active site involves Arg245. The tract at residues Pro266–Arg271 is important for the catalytic mechanism of dephosphorylation.

It belongs to the HPrK/P family. Homohexamer. The cofactor is Mg(2+).

It catalyses the reaction [HPr protein]-L-serine + ATP = [HPr protein]-O-phospho-L-serine + ADP + H(+). The enzyme catalyses [HPr protein]-O-phospho-L-serine + phosphate + H(+) = [HPr protein]-L-serine + diphosphate. Its function is as follows. Catalyzes the ATP- as well as the pyrophosphate-dependent phosphorylation of a specific serine residue in HPr, a phosphocarrier protein of the phosphoenolpyruvate-dependent sugar phosphotransferase system (PTS). HprK/P also catalyzes the pyrophosphate-producing, inorganic phosphate-dependent dephosphorylation (phosphorolysis) of seryl-phosphorylated HPr (P-Ser-HPr). The two antagonistic activities of HprK/P are regulated by several intracellular metabolites, which change their concentration in response to the absence or presence of rapidly metabolisable carbon sources (glucose, fructose, etc.) in the growth medium. Therefore, by controlling the phosphorylation state of HPr, HPrK/P is a sensor enzyme that plays a major role in the regulation of carbon metabolism and sugar transport: it mediates carbon catabolite repression (CCR), and regulates PTS-catalyzed carbohydrate uptake and inducer exclusion. This chain is HPr kinase/phosphorylase, found in Latilactobacillus sakei subsp. sakei (strain 23K) (Lactobacillus sakei subsp. sakei).